A 298-amino-acid chain; its full sequence is MTKQTEYKRKPEWLKIKLNTNENYTGLKKMMRSKNLHTVCEEAKCPNIHECWAVRKTATFMILGAVCTRACRFCAVKTGLPTELDLQEPERVADSVVQMGLKHVVITAVARDDLKDGGAAVFAETVRAVRRKNPFTSIEVLPSDMGGVEENLKMLMDAKPDILNHNIETVRRLSDRVRARAKYERSLEFLRRAKEMQPDIPTKSSIMVGLGETREDLIEAMDDLRANNVDILTLGQYLQPSKKHLPVLKYYPPAEFAELKEIALSKGFSHCEAGPLVRSSYHADEQVRSAKEKTAEAK.

Positions 40, 45, 51, 67, 71, 74, and 280 each coordinate [4Fe-4S] cluster. Residues 53 to 269 (AVRKTATFMI…KEIALSKGFS (217 aa)) enclose the Radical SAM core domain.

This sequence belongs to the radical SAM superfamily. Lipoyl synthase family. Requires [4Fe-4S] cluster as cofactor.

The protein localises to the cytoplasm. The enzyme catalyses [[Fe-S] cluster scaffold protein carrying a second [4Fe-4S](2+) cluster] + N(6)-octanoyl-L-lysyl-[protein] + 2 oxidized [2Fe-2S]-[ferredoxin] + 2 S-adenosyl-L-methionine + 4 H(+) = [[Fe-S] cluster scaffold protein] + N(6)-[(R)-dihydrolipoyl]-L-lysyl-[protein] + 4 Fe(3+) + 2 hydrogen sulfide + 2 5'-deoxyadenosine + 2 L-methionine + 2 reduced [2Fe-2S]-[ferredoxin]. Its pathway is protein modification; protein lipoylation via endogenous pathway; protein N(6)-(lipoyl)lysine from octanoyl-[acyl-carrier-protein]. Functionally, catalyzes the radical-mediated insertion of two sulfur atoms into the C-6 and C-8 positions of the octanoyl moiety bound to the lipoyl domains of lipoate-dependent enzymes, thereby converting the octanoylated domains into lipoylated derivatives. The sequence is that of Lipoyl synthase from Bacillus cereus (strain B4264).